A 364-amino-acid polypeptide reads, in one-letter code: Probable dual-specificity RNA methyltransferase RlmN (364 aa).

The active-site Proton acceptor is the glutamate 106. Residues 112–351 (YPHRNTVCIS…CTVRDTRGRE (240 aa)) enclose the Radical SAM core domain. Cysteines 119 and 356 form a disulfide. The [4Fe-4S] cluster site is built by cysteine 126, cysteine 130, and cysteine 133. Residues 177 to 178 (GE), serine 211, 234 to 236 (SLH), and asparagine 313 each bind S-adenosyl-L-methionine. Residue cysteine 356 is the S-methylcysteine intermediate of the active site.

The protein belongs to the radical SAM superfamily. RlmN family. The cofactor is [4Fe-4S] cluster.

The protein localises to the cytoplasm. The catalysed reaction is adenosine(2503) in 23S rRNA + 2 reduced [2Fe-2S]-[ferredoxin] + 2 S-adenosyl-L-methionine = 2-methyladenosine(2503) in 23S rRNA + 5'-deoxyadenosine + L-methionine + 2 oxidized [2Fe-2S]-[ferredoxin] + S-adenosyl-L-homocysteine. It carries out the reaction adenosine(37) in tRNA + 2 reduced [2Fe-2S]-[ferredoxin] + 2 S-adenosyl-L-methionine = 2-methyladenosine(37) in tRNA + 5'-deoxyadenosine + L-methionine + 2 oxidized [2Fe-2S]-[ferredoxin] + S-adenosyl-L-homocysteine. Functionally, specifically methylates position 2 of adenine 2503 in 23S rRNA and position 2 of adenine 37 in tRNAs. This is Probable dual-specificity RNA methyltransferase RlmN from Mycolicibacterium paratuberculosis (strain ATCC BAA-968 / K-10) (Mycobacterium paratuberculosis).